The sequence spans 656 residues: Chromosomal replication initiator protein DnaA (656 aa).

A domain I, interacts with DnaA modulators region spans residues Met1–Pro100. A disordered region spans residues Thr91–Pro313. The span at Gly97–Arg109 shows a compositional bias: pro residues. The tract at residues Gln101–Ala315 is domain II. 2 stretches are compositionally biased toward basic and acidic residues: residues Gly126–Ala144 and Gln231–Pro273. Residues Gly291 to Pro313 are compositionally biased toward low complexity. Residues Arg316–Ala532 form a domain III, AAA+ region region. Positions 360, 362, 363, and 364 each coordinate ATP. The tract at residues Ser533–Gly656 is domain IV, binds dsDNA.

Belongs to the DnaA family. Oligomerizes as a right-handed, spiral filament on DNA at oriC.

The protein resides in the cytoplasm. Its function is as follows. Plays an essential role in the initiation and regulation of chromosomal replication. ATP-DnaA binds to the origin of replication (oriC) to initiate formation of the DNA replication initiation complex once per cell cycle. Binds the DnaA box (a 9 base pair repeat at the origin) and separates the double-stranded (ds)DNA. Forms a right-handed helical filament on oriC DNA; dsDNA binds to the exterior of the filament while single-stranded (ss)DNA is stabiized in the filament's interior. The ATP-DnaA-oriC complex binds and stabilizes one strand of the AT-rich DNA unwinding element (DUE), permitting loading of DNA polymerase. After initiation quickly degrades to an ADP-DnaA complex that is not apt for DNA replication. Binds acidic phospholipids. This Streptomyces coelicolor (strain ATCC BAA-471 / A3(2) / M145) protein is Chromosomal replication initiator protein DnaA.